A 199-amino-acid chain; its full sequence is Chaperone protein TorD (199 aa).

This sequence belongs to the TorD/DmsD family. TorD subfamily.

It localises to the cytoplasm. Functionally, involved in the biogenesis of TorA. Acts on TorA before the insertion of the molybdenum cofactor and, as a result, probably favors a conformation of the apoenzyme that is competent for acquiring the cofactor. The chain is Chaperone protein TorD from Shigella boydii serotype 18 (strain CDC 3083-94 / BS512).